The chain runs to 274 residues: Type II restriction enzyme HgiBI (274 aa).

This sequence belongs to the TdeIII type II restriction endonuclease family.

The enzyme catalyses Endonucleolytic cleavage of DNA to give specific double-stranded fragments with terminal 5'-phosphates.. Its function is as follows. A P subtype restriction enzyme that recognizes the double-stranded sequence 5'-GGWCC-3' and cleaves after G-1. This system is less active than isoschizomeric RM.HgiEI. This Herpetosiphon aurantiacus (Herpetosiphon giganteus) protein is Type II restriction enzyme HgiBI.